We begin with the raw amino-acid sequence, 518 residues long: Membrane-bound glycerophospholipid O-acyltransferase 2 (518 aa).

A run of 6 helical transmembrane segments spans residues 21-41 (PVDQ…AIWF), 60-80 (TLLG…HFVI), 87-107 (YLMI…FALG), 183-203 (FMGI…FIEG), 230-250 (IAVA…MTIT), and 267-283 (ASWP…LMAA). Active-site residues include asparagine 341 and histidine 372. 3 helical membrane-spanning segments follow: residues 365 to 385 (FILS…FLTG), 415 to 435 (IITW…FVLL), and 443 to 463 (FYSS…LVFP).

It belongs to the membrane-bound acyltransferase family.

The protein localises to the endoplasmic reticulum membrane. It carries out the reaction a 1-acyl-sn-glycero-3-phosphocholine + an acyl-CoA = a 1,2-diacyl-sn-glycero-3-phosphocholine + CoA. The enzyme catalyses a 1-acyl-sn-glycero-3-phosphoethanolamine + an acyl-CoA = a 1,2-diacyl-sn-glycero-3-phosphoethanolamine + CoA. The catalysed reaction is a 1-acyl-sn-glycero-3-phosphate + an acyl-CoA = a 1,2-diacyl-sn-glycero-3-phosphate + CoA. It catalyses the reaction (9Z)-hexadecenoyl-CoA + 1-hexadecanoyl-sn-glycero-3-phosphocholine = 1-hexadecanoyl-2-(9Z-hexadecenoyl)-sn-glycero-3-phosphocholine + CoA. It carries out the reaction 1-hexadecanoyl-sn-glycero-3-phosphoethanolamine + (9Z)-octadecenoyl-CoA = 1-hexadecanoyl-2-(9Z-octadecenoyl)-sn-glycero-3-phosphoethanolamine + CoA. The enzyme catalyses 1-hexadecanoyl-sn-glycero-3-phosphoethanolamine + (9Z)-hexadecenoyl-CoA = 1-hexadecanoyl-2-(9Z)-hexadecenoyl-sn-glycero-3-phosphoethanolamine + CoA. The catalysed reaction is 1-(9Z-octadecenoyl)-sn-glycero-3-phospho-L-serine + hexadecanoyl-CoA = 1-(9Z)-octadecenoyl-2-hexadecanoyl-sn-glycero-3-phosphoserine + CoA. It catalyses the reaction (9Z,12Z)-octadecadienoyl-CoA + 1-hexadecanoyl-sn-glycero-3-phosphocholine = 1-hexadecanoyl-2-(9Z,12Z-octadecadienoyl)-sn-glycero-3-phosphocholine + CoA. It carries out the reaction 1-hexadecanoyl-sn-glycero-3-phosphocholine + (9Z)-octadecenoyl-CoA = 1-hexadecanoyl-2-(9Z-octadecenoyl)-sn-glycero-3-phosphocholine + CoA. The enzyme catalyses 1-hexadecanoyl-sn-glycero-3-phosphate + (9Z)-hexadecenoyl-CoA = 1-hexadecanoyl-2-[(9Z)-hexadec-9-enoyl]-sn-glycero-3-phosphate + CoA. The catalysed reaction is 1-hexadecanoyl-sn-glycero-3-phosphate + (9Z)-octadecenoyl-CoA = 1-hexadecanoyl-2-(9Z-octadecenoyl)-sn-glycero-3-phosphate + CoA. It catalyses the reaction a 1-O-(1Z-alkenyl)-sn-glycero-3-phosphocholine + (9Z)-octadecenoyl-CoA = 1-O-(1Z)-alkenyl-2-(9Z)-octadecenoyl-sn-glycero-3-phosphocholine + CoA. It carries out the reaction a 1-O-(1Z-alkenyl)-sn-glycero-3-phosphoethanolamine + (9Z)-octadecenoyl-CoA = 1-O-(1Z)-alkenyl-2-(9Z)-octadecenoyl-sn-glycero-3-phosphoethanolamine + CoA. The enzyme catalyses 1-octadecanoyl-sn-glycero-3-phosphoethanolamine + (9Z)-octadecenoyl-CoA = 1-octadecanoyl-2-(9Z-octadecenoyl)-sn-glycero-3-phosphoethanolamine + CoA. The catalysed reaction is 1-octadecanoyl-sn-glycero-3-phosphocholine + (9Z)-octadecenoyl-CoA = 1-octadecanoyl-2-(9Z-octadecenoyl)-sn-glycero-3-phosphocholine + CoA. It catalyses the reaction 1-(9Z-octadecenoyl)-sn-glycero-3-phosphoethanolamine + (9Z)-octadecenoyl-CoA = 1,2-di-(9Z-octadecenoyl)-sn-glycero-3-phosphoethanolamine + CoA. It functions in the pathway lipid metabolism; phospholipid metabolism. Acyltransferase which catalyzes the transfer of an acyl group from an acyl-CoA to a lysophospholipid leading to the production of a phospholipid and participates in the reacylation step of the phospholipid remodeling pathway also known as the Lands cycle. May catalyze preferentially the acylation of lysophosphatidylethanolamine (1-acyl-sn-glycero-3-phosphoethanolamine or LPE) and lysophosphatidic acid (LPA) and to a lesser extend lysophosphatidylcholine (LPC) and lysophosphatidylserine (LPS). Prefers oleoyl-CoA as the acyl donor. The sequence is that of Membrane-bound glycerophospholipid O-acyltransferase 2 from Gallus gallus (Chicken).